We begin with the raw amino-acid sequence, 886 residues long: Translation initiation factor IF-2 (886 aa).

Disordered stretches follow at residues 46 to 91 (LDHL…VEVR) and 121 to 297 (EQQK…HGFT). Residues 72–82 (STLSVTGSTGK) are compositionally biased toward polar residues. 3 stretches are compositionally biased toward basic and acidic residues: residues 130–163 (AELKAKQEAERKAKEDADRKAKEEAKRKADAERK), 175–239 (AKSE…DHHL), and 246–260 (REAEDVADARDEQGT). In terms of domain architecture, tr-type G spans 386 to 555 (PRAPVVTVMG…LNQSELLELT (170 aa)). Residues 395–402 (GHVDHGKT) are G1. 395-402 (GHVDHGKT) provides a ligand contact to GTP. Residues 420 to 424 (GITQH) form a G2 region. A G3 region spans residues 441-444 (DTPG). Residues 441-445 (DTPGH) and 495-498 (NKMD) each bind GTP. The tract at residues 495–498 (NKMD) is G4. Positions 531–533 (SAK) are G5.

It belongs to the TRAFAC class translation factor GTPase superfamily. Classic translation factor GTPase family. IF-2 subfamily.

It is found in the cytoplasm. Its function is as follows. One of the essential components for the initiation of protein synthesis. Protects formylmethionyl-tRNA from spontaneous hydrolysis and promotes its binding to the 30S ribosomal subunits. Also involved in the hydrolysis of GTP during the formation of the 70S ribosomal complex. The polypeptide is Translation initiation factor IF-2 (Pseudoalteromonas translucida (strain TAC 125)).